The primary structure comprises 134 residues: D-ribose pyranase (134 aa).

His20 acts as the Proton donor in catalysis. Substrate-binding positions include Asp28, His99, and 123 to 125 (YSN).

Belongs to the RbsD / FucU family. RbsD subfamily. As to quaternary structure, homodecamer.

Its subcellular location is the cytoplasm. It carries out the reaction beta-D-ribopyranose = beta-D-ribofuranose. The protein operates within carbohydrate metabolism; D-ribose degradation; D-ribose 5-phosphate from beta-D-ribopyranose: step 1/2. In terms of biological role, catalyzes the interconversion of beta-pyran and beta-furan forms of D-ribose. This Staphylococcus aureus (strain Mu3 / ATCC 700698) protein is D-ribose pyranase.